Here is a 129-residue protein sequence, read N- to C-terminus: uncharacterized protein (129 aa).

The chain crosses the membrane as a helical span at residues 103–125 (AISSAFQYGLSTSNFFFIFLYIF).

Its subcellular location is the membrane. This is an uncharacterized protein from Acanthamoeba polyphaga (Amoeba).